A 423-amino-acid polypeptide reads, in one-letter code: UDP-N-acetylglucosamine 1-carboxyvinyltransferase (423 aa).

Residue 22–23 coordinates phosphoenolpyruvate; the sequence is KN. Arginine 98 contacts UDP-N-acetyl-alpha-D-glucosamine. Cysteine 122 acts as the Proton donor in catalysis. Cysteine 122 is modified (2-(S-cysteinyl)pyruvic acid O-phosphothioketal). UDP-N-acetyl-alpha-D-glucosamine contacts are provided by residues 127-131, aspartate 311, and isoleucine 333; that span reads RPVDQ.

This sequence belongs to the EPSP synthase family. MurA subfamily.

The protein localises to the cytoplasm. It catalyses the reaction phosphoenolpyruvate + UDP-N-acetyl-alpha-D-glucosamine = UDP-N-acetyl-3-O-(1-carboxyvinyl)-alpha-D-glucosamine + phosphate. It participates in cell wall biogenesis; peptidoglycan biosynthesis. Cell wall formation. Adds enolpyruvyl to UDP-N-acetylglucosamine. This Stenotrophomonas maltophilia (strain K279a) protein is UDP-N-acetylglucosamine 1-carboxyvinyltransferase.